Consider the following 138-residue polypeptide: MLIPKRVKYRRQHRPHRSGVSKGGNRVTFGDYGLQALEPTYITNRQIESARIAINRHMKRGGKVWINIFPDRPLTQKPLGVRMGSGKGPVEKWVANVKPGRILFEASYPNEEVALEALRRAGNKLPCKVRIVKKEDQF.

The span at 1 to 19 shows a compositional bias: basic residues; that stretch reads MLIPKRVKYRRQHRPHRSG. A disordered region spans residues 1-24; it reads MLIPKRVKYRRQHRPHRSGVSKGG.

Belongs to the universal ribosomal protein uL16 family. As to quaternary structure, part of the 50S ribosomal subunit.

In terms of biological role, binds 23S rRNA and is also seen to make contacts with the A and possibly P site tRNAs. The sequence is that of Large ribosomal subunit protein uL16 from Corynebacterium jeikeium (strain K411).